The chain runs to 359 residues: snRNA-activating protein complex subunit 2 (359 aa).

The span at 1–11 shows a compositional bias: basic residues; sequence MKPPQRRRRVP. Disordered stretches follow at residues 1-22, 157-221, and 291-327; these read MKPP…TGPT, NQDG…GSST, and TALP…SEPI.

Part of the SNAPc complex composed of 5 subunits: SNAPC1, SNAPC2, SNAPC3, SNAPC4 and SNAPC5. SNAPC2 interacts with TBP and SNAPC4.

It localises to the nucleus. Its function is as follows. Part of the SNAPc complex required for the transcription of both RNA polymerase II and III small-nuclear RNA genes. Binds to the proximal sequence element (PSE), a non-TATA-box basal promoter element common to these 2 types of genes. Recruits TBP and BRF2 to the U6 snRNA TATA box. The polypeptide is snRNA-activating protein complex subunit 2 (Snapc2) (Mus musculus (Mouse)).